Consider the following 359-residue polypeptide: Small ribosomal subunit protein mS22 (359 aa).

The interval 40-65 is disordered; sequence RPQPFEVGQPRRLLSSEAESGSSEVK. S54 is modified (phosphoserine). Residue K210 is modified to N6-acetyllysine.

The protein belongs to the mitochondrion-specific ribosomal protein mS22 family. As to quaternary structure, component of the mitochondrial ribosome small subunit (28S) which comprises a 12S rRNA and about 30 distinct proteins.

It localises to the mitochondrion. The sequence is that of Small ribosomal subunit protein mS22 (Mrps22) from Mus musculus (Mouse).